Reading from the N-terminus, the 435-residue chain is MKTTYVNATIVTMNEQNEVIENGYIIVENDQIIDVKSGKFANDFEVDEVIDMKGKWVLPGLVNTHTHVVMSLLRGIGDDMLLQPWLETRIWPLESQFTPQIAVASTELGLLEMVKSGTTSFSDMFNPIGVDQDAIMETVSRSGMRAAVSRTLFSFGTKDDEKKAIEEAEKYVKRYYNESGMLTTMVAPHSPYTCSTELLEECARIAVENQTMVHIHLSETEREVRDIEAQYGKRPVEYAASCGLFKRPTVIAHGVVLNDDERAFLAENDVRVAHNPNSNLKLGSGIANVKAMLEAGIKVGIATDSVASNNNLDMFEEMRIATLLQKGIHQDATALPVETALTLATKGAAEVIGMKQTGSLEIGKCADFITIDPSNKPHLQPADEVLSHLVYAASGKDISDVIINGKHVVWNGECKTLDEERIIFEASRYKRGLQR.

Zn(2+) contacts are provided by His65 and His67. 3 residues coordinate substrate: Glu94, Arg150, and His189. His216 is a Zn(2+) binding site. Substrate-binding residues include Glu219 and Asp304. Asp304 contributes to the Zn(2+) binding site.

It belongs to the metallo-dependent hydrolases superfamily. MTA/SAH deaminase family. The cofactor is Zn(2+).

It catalyses the reaction S-adenosyl-L-homocysteine + H2O + H(+) = S-inosyl-L-homocysteine + NH4(+). The enzyme catalyses S-methyl-5'-thioadenosine + H2O + H(+) = S-methyl-5'-thioinosine + NH4(+). Functionally, catalyzes the deamination of 5-methylthioadenosine and S-adenosyl-L-homocysteine into 5-methylthioinosine and S-inosyl-L-homocysteine, respectively. Is also able to deaminate adenosine. The chain is 5-methylthioadenosine/S-adenosylhomocysteine deaminase from Bacillus cereus (strain B4264).